We begin with the raw amino-acid sequence, 370 residues long: 4-hydroxy-3-methylbut-2-en-1-yl diphosphate synthase (flavodoxin) (370 aa).

4 residues coordinate [4Fe-4S] cluster: Cys271, Cys274, Cys306, and Glu313.

Belongs to the IspG family. It depends on [4Fe-4S] cluster as a cofactor.

The catalysed reaction is (2E)-4-hydroxy-3-methylbut-2-enyl diphosphate + oxidized [flavodoxin] + H2O + 2 H(+) = 2-C-methyl-D-erythritol 2,4-cyclic diphosphate + reduced [flavodoxin]. It functions in the pathway isoprenoid biosynthesis; isopentenyl diphosphate biosynthesis via DXP pathway; isopentenyl diphosphate from 1-deoxy-D-xylulose 5-phosphate: step 5/6. In terms of biological role, converts 2C-methyl-D-erythritol 2,4-cyclodiphosphate (ME-2,4cPP) into 1-hydroxy-2-methyl-2-(E)-butenyl 4-diphosphate. The polypeptide is 4-hydroxy-3-methylbut-2-en-1-yl diphosphate synthase (flavodoxin) (Actinobacillus pleuropneumoniae serotype 5b (strain L20)).